The primary structure comprises 305 residues: Flagellin FlaB2 (305 aa).

A propeptide spans 1–18 (MGLQKIVKKYNKKMKRKG) (propeptide).

This sequence belongs to the archaeal flagellin family. In terms of processing, glycosylated.

The protein resides in the archaeal flagellum. Its function is as follows. Flagellin is the subunit protein which polymerizes to form the filaments of archaeal flagella. This Saccharolobus shibatae (strain ATCC 51178 / DSM 5389 / JCM 8931 / NBRC 15437 / B12) (Sulfolobus shibatae) protein is Flagellin FlaB2.